A 197-amino-acid chain; its full sequence is Large ribosomal subunit protein uL13B (197 aa).

Ser193 carries the post-translational modification Phosphoserine.

The protein belongs to the universal ribosomal protein uL13 family. In terms of assembly, component of the large ribosomal subunit (LSU). Mature yeast ribosomes consist of a small (40S) and a large (60S) subunit. The 40S small subunit contains 1 molecule of ribosomal RNA (18S rRNA) and at least 33 different proteins. The large 60S subunit contains 3 rRNA molecules (25S, 5.8S and 5S rRNA) and at least 46 different proteins.

The protein localises to the cytoplasm. In terms of biological role, component of the ribosome, a large ribonucleoprotein complex responsible for the synthesis of proteins in the cell. The small ribosomal subunit (SSU) binds messenger RNAs (mRNAs) and translates the encoded message by selecting cognate aminoacyl-transfer RNA (tRNA) molecules. The large subunit (LSU) contains the ribosomal catalytic site termed the peptidyl transferase center (PTC), which catalyzes the formation of peptide bonds, thereby polymerizing the amino acids delivered by tRNAs into a polypeptide chain. The nascent polypeptides leave the ribosome through a tunnel in the LSU and interact with protein factors that function in enzymatic processing, targeting, and the membrane insertion of nascent chains at the exit of the ribosomal tunnel. This chain is Large ribosomal subunit protein uL13B (rpl1601), found in Schizosaccharomyces pombe (strain 972 / ATCC 24843) (Fission yeast).